The sequence spans 279 residues: MNLASSACLLLLFLLGIAQALPVQNEEGHEEGNKEGHGEEGVEEGDEDDFVDFTTRILTSNNNTDQLLLEGDLVAPTNRNAMKCWYNSCFWKKASNGFVVIPYVISSQYSRGEVATIEGAMRAFNGRTCIRFVRRTNEYDFISVVSKNGCYSELGRKGGQQELSLNRGGCMYSGIIQHELNHALGFQHEQTRSDRDSYVRINWQNIIPASAYNFNKHDTNNLNTPYDYSSIMHYGRDAFSIAYGRDSITPIPNPNVPIGQRNGMSRWDITRSNVLYNCR.

Residues 1-20 (MNLASSACLLLLFLLGIAQA) form the signal peptide. A propeptide spans 21-79 (LPVQNEEGHEEGNKEGHGEEGVEEGDEDDFVDFTTRILTSNNNTDQLLLEGDLVAPTNR) (activation peptide). The span at 26-40 (EEGHEEGNKEGHGEE) shows a compositional bias: basic and acidic residues. Positions 26 to 46 (EEGHEEGNKEGHGEEGVEEGD) are disordered. N-linked (GlcNAc...) asparagine glycosylation is present at Asn62. The 200-residue stretch at 80 to 279 (NAMKCWYNSC…TRSNVLYNCR (200 aa)) folds into the Peptidase M12A domain. 3 disulfides stabilise this stretch: Cys84–Cys89, Cys129–Cys278, and Cys150–Cys170. His178 lines the Zn(2+) pocket. Residue Glu179 is part of the active site. The Zn(2+) site is built by His182 and His188.

It depends on Zn(2+) as a cofactor.

The protein resides in the zymogen granule. The enzyme catalyses Hydrolysis of the inner layer of fish egg envelope. Also hydrolysis of casein and small molecule substrates such as succinyl-Leu-Leu-Val-Tyr-|-7-(4-methyl)coumarylamide.. Functionally, participates in the breakdown of the egg envelope, which is derived from the egg extracellular matrix, at the time of hatching. Thus allowing the newly hatched fish to swim free. HCE binds tightly to the egg envelope while it exerts the choriolytic swelling action. The sequence is that of High choriolytic enzyme 2 (hceb) from Oryzias latipes (Japanese rice fish).